Here is a 282-residue protein sequence, read N- to C-terminus: Protein-export membrane protein SecF (282 aa).

A run of 6 helical transmembrane segments spans residues 9–29 (IAIP…KGIP), 120–140 (EGFK…YLYF), 149–169 (IILS…LLGI), 174–194 (ATIA…ILLT), 214–234 (KTGL…LIVV), and 236–256 (LFIP…LALI).

The protein belongs to the SecD/SecF family. SecF subfamily. Part of the protein translocation apparatus. Forms a complex with SecD.

Its subcellular location is the cell membrane. Involved in protein export. This is Protein-export membrane protein SecF from Methanocaldococcus jannaschii (strain ATCC 43067 / DSM 2661 / JAL-1 / JCM 10045 / NBRC 100440) (Methanococcus jannaschii).